Here is a 140-residue protein sequence, read N- to C-terminus: Arsenate reductase ArsI2 (140 aa).

The active-site Nucleophile; cysteine thioarsenate intermediate is Cys10.

Belongs to the ArsC family.

The enzyme catalyses [glutaredoxin]-dithiol + arsenate + glutathione + H(+) = glutathionyl-S-S-[glutaredoxin] + arsenite + H2O. In terms of biological role, catalyzes the reduction of arsenate [As(V)] to arsenite [As(III)]. Does not constitute the major arsenate reductase in cells: essential only in the absence of ArsC (AC P74313). This chain is Arsenate reductase ArsI2, found in Synechocystis sp. (strain ATCC 27184 / PCC 6803 / Kazusa).